An 83-amino-acid chain; its full sequence is Exodeoxyribonuclease 7 small subunit (83 aa).

This sequence belongs to the XseB family. Heterooligomer composed of large and small subunits.

The protein resides in the cytoplasm. The enzyme catalyses Exonucleolytic cleavage in either 5'- to 3'- or 3'- to 5'-direction to yield nucleoside 5'-phosphates.. Bidirectionally degrades single-stranded DNA into large acid-insoluble oligonucleotides, which are then degraded further into small acid-soluble oligonucleotides. The sequence is that of Exodeoxyribonuclease 7 small subunit from Rhodopseudomonas palustris (strain HaA2).